Here is a 176-residue protein sequence, read N- to C-terminus: MRELVAKRYAKALVEALGEDRLASTLEWLKGSESAFGTEAFQEMLASPQISKTLKGQVVLDVLGDGEAKLLNFIKVLADKNRLELIPDVCKELEKSIAATRNEYVAVLTTQEAFDDKTLKAIEETLAKKLQAKLVLSQKREEFEGVKLVVEDLGVEVSFSRERFINDLKNHILKAF.

Belongs to the ATPase delta chain family. As to quaternary structure, F-type ATPases have 2 components, F(1) - the catalytic core - and F(0) - the membrane proton channel. F(1) has five subunits: alpha(3), beta(3), gamma(1), delta(1), epsilon(1). F(0) has three main subunits: a(1), b(2) and c(10-14). The alpha and beta chains form an alternating ring which encloses part of the gamma chain. F(1) is attached to F(0) by a central stalk formed by the gamma and epsilon chains, while a peripheral stalk is formed by the delta and b chains.

It localises to the cell inner membrane. Its function is as follows. F(1)F(0) ATP synthase produces ATP from ADP in the presence of a proton or sodium gradient. F-type ATPases consist of two structural domains, F(1) containing the extramembraneous catalytic core and F(0) containing the membrane proton channel, linked together by a central stalk and a peripheral stalk. During catalysis, ATP synthesis in the catalytic domain of F(1) is coupled via a rotary mechanism of the central stalk subunits to proton translocation. This protein is part of the stalk that links CF(0) to CF(1). It either transmits conformational changes from CF(0) to CF(1) or is implicated in proton conduction. The polypeptide is ATP synthase subunit delta (Wolinella succinogenes (strain ATCC 29543 / DSM 1740 / CCUG 13145 / JCM 31913 / LMG 7466 / NCTC 11488 / FDC 602W) (Vibrio succinogenes)).